We begin with the raw amino-acid sequence, 324 residues long: Probable pectinesterase A (324 aa).

Residues 1–19 (MYLPSLVLGLLGFGLTAST) form the signal peptide. Asn27 carries N-linked (GlcNAc...) asparagine glycosylation. Gln142 contacts substrate. Asp165 serves as the catalytic Proton donor. The active-site Nucleophile is Asp186. Substrate is bound by residues Arg246 and Trp248.

It belongs to the pectinesterase family.

It localises to the secreted. The catalysed reaction is [(1-&gt;4)-alpha-D-galacturonosyl methyl ester](n) + n H2O = [(1-&gt;4)-alpha-D-galacturonosyl](n) + n methanol + n H(+). The protein operates within glycan metabolism; pectin degradation; 2-dehydro-3-deoxy-D-gluconate from pectin: step 1/5. In terms of biological role, involved in maceration and soft-rotting of plant tissue. In Aspergillus fumigatus (strain CBS 144.89 / FGSC A1163 / CEA10) (Neosartorya fumigata), this protein is Probable pectinesterase A (pmeA).